The following is a 693-amino-acid chain: UvrABC system protein B (693 aa).

One can recognise a Helicase ATP-binding domain in the interval 35 to 188 (ERINNGEKDV…DQLLRQFVGI (154 aa)). Position 48–55 (48–55 (GATGTGKS)) interacts with ATP. The short motif at 101–124 (YYDYYQPEAYVPQTDTFIEKDSSV) is the Beta-hairpin element. In terms of domain architecture, Helicase C-terminal spans 438–600 (QIDDLLGEIR…VDPTPLRKRI (163 aa)). The disordered stretch occupies residues 612–634 (ADTKSLLESAGKGRSRGKAPVPV). Residues 648-683 (VDLIEQLTAQMHSAAGELQFELAARLRDEVGDLKKE) enclose the UVR domain.

This sequence belongs to the UvrB family. Forms a heterotetramer with UvrA during the search for lesions. Interacts with UvrC in an incision complex.

The protein resides in the cytoplasm. The UvrABC repair system catalyzes the recognition and processing of DNA lesions. A damage recognition complex composed of 2 UvrA and 2 UvrB subunits scans DNA for abnormalities. Upon binding of the UvrA(2)B(2) complex to a putative damaged site, the DNA wraps around one UvrB monomer. DNA wrap is dependent on ATP binding by UvrB and probably causes local melting of the DNA helix, facilitating insertion of UvrB beta-hairpin between the DNA strands. Then UvrB probes one DNA strand for the presence of a lesion. If a lesion is found the UvrA subunits dissociate and the UvrB-DNA preincision complex is formed. This complex is subsequently bound by UvrC and the second UvrB is released. If no lesion is found, the DNA wraps around the other UvrB subunit that will check the other stand for damage. The protein is UvrABC system protein B of Renibacterium salmoninarum (strain ATCC 33209 / DSM 20767 / JCM 11484 / NBRC 15589 / NCIMB 2235).